Reading from the N-terminus, the 364-residue chain is Protein RecA (364 aa).

Position 77 to 84 (77 to 84) interacts with ATP; that stretch reads GPESSGKT. The tract at residues 343–364 is disordered; sequence DRFLQNGGPDPDDGDGDATAEM. Positions 352–364 are enriched in acidic residues; sequence DPDDGDGDATAEM.

It belongs to the RecA family.

It localises to the cytoplasm. Functionally, can catalyze the hydrolysis of ATP in the presence of single-stranded DNA, the ATP-dependent uptake of single-stranded DNA by duplex DNA, and the ATP-dependent hybridization of homologous single-stranded DNAs. It interacts with LexA causing its activation and leading to its autocatalytic cleavage. The protein is Protein RecA of Rhizobium johnstonii (strain DSM 114642 / LMG 32736 / 3841) (Rhizobium leguminosarum bv. viciae).